Reading from the N-terminus, the 407-residue chain is MTTSGALFPSLVPGSRGASNKYLVEFRAGKMSLKGTTVTPDKRKGLVYIQQTDDSLIHFCWKDRTSGNVEDDLIIFPDDCEFKRVPQCPSGRVYVLKFKAGSKRLFFWMQEPKTDQDEEHCRKVNEYLNNPPMPGALGASGSSGHELSALGGEGGLQSLLGNMSHSQLMQLIGPAGLGGLGGLGALTGPGLASLLGSSGPPGSSSSSSSRSQSAAVTPSSTTSSTRATPAPSAPAAASATSPSPAPSSGNGASTAASPTQPIQLSDLQSILATMNVPAGPAGGQQVDLASVLTPEIMAPILANADVQERLLPYLPSGESLPQTADEIQNTLTSPQFQQALGMFSAALASGQLGPLMCQFGLPAEAVEAANKGDVEAFAKAMQNNAKPEQKEGDTKDKKDEEEDMSLD.

Threonine 2 is subject to N-acetylthreonine. At serine 15 the chain carries Phosphoserine. The Pru domain occupies 18-131 (ASNKYLVEFR…RKVNEYLNNP (114 aa)). Lysine 34 is covalently cross-linked (Glycyl lysine isopeptide (Lys-Gly) (interchain with G-Cter in ubiquitin)). Phosphotyrosine is present on tyrosine 127. 2 positions are modified to phosphoserine: serine 140 and serine 211. Disordered stretches follow at residues 194–259 (LLGS…ASPT) and 379–407 (KAMQ…MSLD). Threonine 217 carries the post-translational modification Phosphothreonine. The interaction with UCHL5 stretch occupies residues 253 to 407 (STAASPTQPI…KDEEEDMSLD (155 aa)). Residues 277–391 (PAGPAGGQQV…QNNAKPEQKE (115 aa)) form the DEUBAD domain. Basic and acidic residues predominate over residues 387–398 (PEQKEGDTKDKK). Serine 405 carries the phosphoserine modification.

Belongs to the ADRM1 family. As to quaternary structure, component of the 19S proteasome regulatory particle complex. The 26S proteasome consists of a 20S core particle (CP) and two 19S regulatory subunits (RP). Interacts with the proteasomal scaffolding protein PSMD1. Interacts with deubiquitinase UCHL5; this interaction activates the auto-inhibited UCHL5 by deoligomerizing it. Interacts with UBQLN2 and ubiquitin. Post-translationally, ubiquitinated by UBE3C in response to proteotoxic stress.

The protein localises to the cytoplasm. It localises to the nucleus. In terms of biological role, component of the 26S proteasome, a multiprotein complex involved in the ATP-dependent degradation of ubiquitinated proteins. This complex plays a key role in the maintenance of protein homeostasis by removing misfolded or damaged proteins, which could impair cellular functions, and by removing proteins whose functions are no longer required. Therefore, the proteasome participates in numerous cellular processes, including cell cycle progression, apoptosis, or DNA damage repair. Within the complex, functions as a proteasomal ubiquitin receptor. Engages and activates 19S-associated deubiquitinases UCHL5 and PSMD14 during protein degradation. UCHL5 reversibly associate with the 19S regulatory particle whereas PSMD14 is an intrinsic subunit of the proteasome lid subcomplex. The chain is Proteasomal ubiquitin receptor ADRM1 (ADRM1) from Homo sapiens (Human).